Reading from the N-terminus, the 96-residue chain is UPF0235 protein YPN_3141 (96 aa).

It belongs to the UPF0235 family.

The polypeptide is UPF0235 protein YPN_3141 (Yersinia pestis bv. Antiqua (strain Nepal516)).